Reading from the N-terminus, the 183-residue chain is Threonylcarbamoyl-AMP synthase (183 aa).

In terms of domain architecture, YrdC-like spans 1–183 (MNITQIIEKL…LFTNQLVRQG (183 aa)).

It belongs to the SUA5 family. TsaC subfamily.

Its subcellular location is the cytoplasm. The catalysed reaction is L-threonine + hydrogencarbonate + ATP = L-threonylcarbamoyladenylate + diphosphate + H2O. Required for the formation of a threonylcarbamoyl group on adenosine at position 37 (t(6)A37) in tRNAs that read codons beginning with adenine. Catalyzes the conversion of L-threonine, HCO(3)(-)/CO(2) and ATP to give threonylcarbamoyl-AMP (TC-AMP) as the acyladenylate intermediate, with the release of diphosphate. The polypeptide is Threonylcarbamoyl-AMP synthase (Histophilus somni (strain 129Pt) (Haemophilus somnus)).